A 239-amino-acid polypeptide reads, in one-letter code: Tetraspanin-9 (239 aa).

Residues 1–13 (MARGCLCCLKYMM) lie on the Cytoplasmic side of the membrane. The helical transmembrane segment at 14–34 (FLFNLIFWLCGCGLLGVGIWL) threads the bilayer. Topologically, residues 35–55 (SVSQGNFATFSPSFPSLSAAN) are extracellular. Residues 56–76 (LVIAIGTIVMVTGFLGCLGAI) traverse the membrane as a helical segment. Residues 77–85 (KENRCLLLS) lie on the Cytoplasmic side of the membrane. The helical transmembrane segment at 86 to 106 (FFIVLLIILLAELILIILFFV) threads the bilayer. The Extracellular segment spans residues 107-203 (YMDKVNENAR…VKMWFDDNKH (97 aa)). N-linked (GlcNAc...) asparagine glycosylation occurs at Asn180. A helical membrane pass occupies residues 204–224 (VLGTVGMCILIMQILGMAFSM). The Cytoplasmic portion of the chain corresponds to 225 to 239 (TLFQHIHRTGKKYDA).

The protein belongs to the tetraspanin (TM4SF) family. Found in a complex with GP6. Post-translationally, glycosylated.

It is found in the membrane. The protein is Tetraspanin-9 (TSPAN9) of Sus scrofa (Pig).